Reading from the N-terminus, the 79-residue chain is Conotoxin Vi6.3 (79 aa).

The N-terminal stretch at 1 to 22 is a signal peptide; the sequence is MKLTCVLIITVLFLTASQLITA. Residues 23-47 constitute a propeptide that is removed on maturation; the sequence is DYSRDQRQYRAVRLGDEMRNFKGAR. Cystine bridges form between Cys49–Cys62, Cys56–Cys67, and Cys61–Cys77. A 4-hydroxyproline mark is found at Pro60 and Pro63.

This sequence belongs to the conotoxin O1 superfamily. As to expression, expressed by the venom duct.

The protein localises to the secreted. Functionally, ion channel inhibitor that inhibits the increase in intracellular calcium upon depolarization in DRG neurons. In vivo, both intraperitoneal and intracranial injections into mice induce hyperactivity. This Conus virgo (Virgin cone) protein is Conotoxin Vi6.3.